A 298-amino-acid chain; its full sequence is DNA repair protein RecO (298 aa).

The protein belongs to the RecO family.

Its function is as follows. Involved in DNA repair and RecF pathway recombination. The polypeptide is DNA repair protein RecO (Cupriavidus metallidurans (strain ATCC 43123 / DSM 2839 / NBRC 102507 / CH34) (Ralstonia metallidurans)).